Reading from the N-terminus, the 442-residue chain is F-box protein KIB2 (442 aa).

The 48-residue stretch at 62–109 (SKQPVLVLDLLRSILERLSFVDFHRGRCISLEWYSASESCLAVKNPTS) folds into the F-box domain. The Nuclear localization signal signature appears at 236–243 (HKKGDENY).

In terms of assembly, interacts with ASK7/BIN2/SK21.

Its subcellular location is the cytoplasm. The protein localises to the nucleus. The protein resides in the nucleolus. Component of SCF(ASK-cullin-F-box) E3 ubiquitin ligase complexes, which may mediate the ubiquitination and subsequent proteasomal degradation of target proteins. Required for brassinosteroid (BR) signal transduction. Mediates ASK7/BIN2/SK21 inactivation both by competing with substrate binding (e.g. BZR1) and by promoting its ubiquitination and subsequent proteasomal degradation. The protein is F-box protein KIB2 of Arabidopsis thaliana (Mouse-ear cress).